Here is a 147-residue protein sequence, read N- to C-terminus: Large ribosomal subunit protein uL15 (147 aa).

The disordered stretch occupies residues 1 to 57 (MRLHDVKPQKGSKKRKKRVARGISAGQGASAGLGMRGQKSRSGSGTRPGFEGGQQPL). The segment covering 10-20 (KGSKKRKKRVA) has biased composition (basic residues).

This sequence belongs to the universal ribosomal protein uL15 family. In terms of assembly, part of the 50S ribosomal subunit.

Functionally, binds to the 23S rRNA. This chain is Large ribosomal subunit protein uL15, found in Nostoc punctiforme (strain ATCC 29133 / PCC 73102).